Consider the following 639-residue polypeptide: MELPWLSLTTFTLSLLIYFSSTTQAFKRCPNCGSTRVPYPLSTGLDCGDPGYRIRCDNYGSLWFDTLNGSTNPIKTIDPSGQRFVLRPPGFEQNKCVSVDIKYHGIQLDLNLPFNVSCSNTVIIMNCTKDGLDAYSSQGFNCSDNSLCHKFLNANLEARGNCRGVTSCCWYKTGASVNTYKVYRARPDMCSAYQSFMNLDLTIPVSKWGEPAVEILWEAPREPVCKSQGDCRDLLNSVCSNDSTNLGQKRCFCKKGFQWDSVNAVCEVNRCSKRKSCKRWSNLPLLGGLAGGVGAILIAGFITKTIVSKQNRRIAGNQSWASVRKLHRNLLSINSTGLDRIFTGKEIVKATDNFAKSNLLGFGGFGEVFKGNLDDGTTVAVKRAKLGNEKSIYQIVNEVQILCQVSHKNLVKLLGCCIELEMPVLVYEFVPNGTLFEHIYGGGGGGGGLYDHLPLRRRLMIAHQTAQGLDYLHSSSSPPIYHRDVKSSNILLDENLDVKVADFGLSRLGVSDVSHVTTCAQGTLGYLDPEYYLNFQLTDKSDVYSFGVVLFELLTCKKAIDFNREEEDVNLVVFVRKALKEGRLMDVIDPVIGIGATEKEIESMKALGVLAELCVKETRQCRPTMQVAAKEIENILHGI.

A signal peptide spans 1–25 (MELPWLSLTTFTLSLLIYFSSTTQA). Residues 26 to 282 (FKRCPNCGST…KRKSCKRWSN (257 aa)) are Extracellular-facing. 5 N-linked (GlcNAc...) asparagine glycosylation sites follow: Asn-68, Asn-115, Asn-126, Asn-141, and Asn-241. Residues 283 to 303 (LPLLGGLAGGVGAILIAGFIT) traverse the membrane as a helical segment. Residues 304–639 (KTIVSKQNRR…KEIENILHGI (336 aa)) lie on the Cytoplasmic side of the membrane. Positions 354–639 (FAKSNLLGFG…KEIENILHGI (286 aa)) constitute a Protein kinase domain. Residues 360–368 (LGFGGFGEV) and Lys-382 each bind ATP. Asp-484 functions as the Proton acceptor in the catalytic mechanism.

This sequence belongs to the protein kinase superfamily. Ser/Thr protein kinase family.

It is found in the membrane. The catalysed reaction is L-seryl-[protein] + ATP = O-phospho-L-seryl-[protein] + ADP + H(+). It catalyses the reaction L-threonyl-[protein] + ATP = O-phospho-L-threonyl-[protein] + ADP + H(+). Putative serine/threonine-protein kinase that may function as a signaling receptor of extracellular matrix component. The chain is Wall-associated receptor kinase-like 15 (WAKL15) from Arabidopsis thaliana (Mouse-ear cress).